A 417-amino-acid chain; its full sequence is Serine hydroxymethyltransferase 1 (417 aa).

Residues leucine 121 and 125–127 contribute to the (6S)-5,6,7,8-tetrahydrofolate site; that span reads GHL. The residue at position 229 (lysine 229) is an N6-(pyridoxal phosphate)lysine. Residue 354 to 356 coordinates (6S)-5,6,7,8-tetrahydrofolate; the sequence is SPF.

It belongs to the SHMT family. Homodimer. Pyridoxal 5'-phosphate serves as cofactor.

The protein localises to the cytoplasm. It carries out the reaction (6R)-5,10-methylene-5,6,7,8-tetrahydrofolate + glycine + H2O = (6S)-5,6,7,8-tetrahydrofolate + L-serine. It functions in the pathway one-carbon metabolism; tetrahydrofolate interconversion. It participates in amino-acid biosynthesis; glycine biosynthesis; glycine from L-serine: step 1/1. Catalyzes the reversible interconversion of serine and glycine with tetrahydrofolate (THF) serving as the one-carbon carrier. This reaction serves as the major source of one-carbon groups required for the biosynthesis of purines, thymidylate, methionine, and other important biomolecules. Also exhibits THF-independent aldolase activity toward beta-hydroxyamino acids, producing glycine and aldehydes, via a retro-aldol mechanism. This chain is Serine hydroxymethyltransferase 1, found in Pseudomonas syringae pv. syringae (strain B728a).